A 439-amino-acid chain; its full sequence is MSSPKVGFVSLGRPKALVDSERILTQLRTEGYEVTPEYNDADVVVVNTCGFIDSAKAESLEAIGEAIAENGKVIVTGCMGVEESVIRQVHPSVLAVTGPQQYEEVVRAVHGVAPPRQDHNPYLDLVPPQGVKLTPRHYAYLKISEGCNHRCSFCIIPSMRGDLVSRPVGDVLSEAERLVRAGVKELLVISQDTSAYGVDIKYRSGFWNGRPVKTRMTELCAALSELGVWTRLHYVYPYPHVDEVIGLMADGKVLPYLDIPFQHASPRILRAMKRPAFEDKTLARIKRWREECPDLTLRSTFIVGFPGETEEDFQYLLDWMSEAQLDRVGCFQYSPVEGAPANTLDNPVPDEVKQERWERFMEHQQAISTARLSTRVGREIDVLIDSVDEEGAVGRSSADAPEIDGCVYVDSEQPLKAGDMVRVRVTDSDEYDLWGERIA.

Positions 4 to 114 constitute an MTTase N-terminal domain; the sequence is PKVGFVSLGR…VVRAVHGVAP (111 aa). One can recognise a Radical SAM core domain in the interval 133–370; the sequence is LTPRHYAYLK…MEHQQAISTA (238 aa). Residues C147, C151, and C154 each contribute to the [4Fe-4S] cluster site. The TRAM domain occupies 373-439; the sequence is STRVGREIDV…EYDLWGERIA (67 aa).

It belongs to the methylthiotransferase family. RimO subfamily. The cofactor is [4Fe-4S] cluster.

Its subcellular location is the cytoplasm. The catalysed reaction is L-aspartate(89)-[ribosomal protein uS12]-hydrogen + (sulfur carrier)-SH + AH2 + 2 S-adenosyl-L-methionine = 3-methylsulfanyl-L-aspartate(89)-[ribosomal protein uS12]-hydrogen + (sulfur carrier)-H + 5'-deoxyadenosine + L-methionine + A + S-adenosyl-L-homocysteine + 2 H(+). Its function is as follows. Catalyzes the methylthiolation of an aspartic acid residue of ribosomal protein uS12. In Bordetella bronchiseptica (strain ATCC BAA-588 / NCTC 13252 / RB50) (Alcaligenes bronchisepticus), this protein is Ribosomal protein uS12 methylthiotransferase RimO.